Here is a 177-residue protein sequence, read N- to C-terminus: Large ribosomal subunit protein uL6 (177 aa).

It belongs to the universal ribosomal protein uL6 family. In terms of assembly, part of the 50S ribosomal subunit.

This protein binds to the 23S rRNA, and is important in its secondary structure. It is located near the subunit interface in the base of the L7/L12 stalk, and near the tRNA binding site of the peptidyltransferase center. This is Large ribosomal subunit protein uL6 from Sphingopyxis alaskensis (strain DSM 13593 / LMG 18877 / RB2256) (Sphingomonas alaskensis).